The sequence spans 424 residues: MAYHIPRGTQDILPGESDRWQFVEQIMRETCRTYQYKEIRTPIFEHTELFARGVGESTDIVQKEMYTFEDRKGRSLTLRPEGTAAAVRAFNENKLFANPVQPTKLYYVGPMFRYERPQTGRFRQFYQFGIEAIGSKDPAVDAEVIALAMSIYRKAGLKHVKLVLNSLGDQDSRKSYREALVKHFEPRIGEFCSDCQSRLHTNPLRILDCKKDREHELMKTAPSILDYLNEESAAYFEKVKQYLNDLGIPFEIDPNLVRGLDYYNHTAFEIMSNAEGFGAITTLAGGGRYDGLVEQIGGPEAPGIGFAMSIERLLAAIDAEKTELPVNQGIDCYIVTLGEKAKDYSVSLVYKLREAGISSEIDYENKKMKGQFKTADRLGARFIAILGEDELAQNKINVKDAETGEQREVVLDELIQVLKADQKQ.

This sequence belongs to the class-II aminoacyl-tRNA synthetase family. Homodimer.

Its subcellular location is the cytoplasm. It carries out the reaction tRNA(His) + L-histidine + ATP = L-histidyl-tRNA(His) + AMP + diphosphate + H(+). This Bacillus velezensis (strain DSM 23117 / BGSC 10A6 / LMG 26770 / FZB42) (Bacillus amyloliquefaciens subsp. plantarum) protein is Histidine--tRNA ligase.